The primary structure comprises 108 residues: Nucleoid-associated protein BTH_I2220 (108 aa).

The protein belongs to the YbaB/EbfC family. In terms of assembly, homodimer.

It is found in the cytoplasm. The protein resides in the nucleoid. Binds to DNA and alters its conformation. May be involved in regulation of gene expression, nucleoid organization and DNA protection. In Burkholderia thailandensis (strain ATCC 700388 / DSM 13276 / CCUG 48851 / CIP 106301 / E264), this protein is Nucleoid-associated protein BTH_I2220.